The following is a 405-amino-acid chain: D-threonate kinase (405 aa).

Residues D12, R59, and 88–91 (KVDS) contribute to the substrate site. ATP-binding positions include S243, 337 to 340 (GGDG), and G383.

The protein belongs to the four-carbon acid sugar kinase family.

The enzyme catalyses D-threonate + ATP = 4-O-phospho-D-threonate + ADP + H(+). In terms of biological role, catalyzes the ATP-dependent phosphorylation of D-threonate to D-threonate 4-phosphate. Can also phosphorylate 4-hydroxy-L-threonine, with lower efficiency. This Bordetella bronchiseptica (strain ATCC BAA-588 / NCTC 13252 / RB50) (Alcaligenes bronchisepticus) protein is D-threonate kinase.